A 210-amino-acid chain; its full sequence is Imidazole glycerol phosphate synthase subunit HisH (210 aa).

Positions 3 to 210 (TIAIIDYGMG…ILKNFALSKA (208 aa)) constitute a Glutamine amidotransferase type-1 domain. The active-site Nucleophile is the Cys-81. Catalysis depends on residues His-190 and Glu-192.

Heterodimer of HisH and HisF.

The protein resides in the cytoplasm. The catalysed reaction is 5-[(5-phospho-1-deoxy-D-ribulos-1-ylimino)methylamino]-1-(5-phospho-beta-D-ribosyl)imidazole-4-carboxamide + L-glutamine = D-erythro-1-(imidazol-4-yl)glycerol 3-phosphate + 5-amino-1-(5-phospho-beta-D-ribosyl)imidazole-4-carboxamide + L-glutamate + H(+). The enzyme catalyses L-glutamine + H2O = L-glutamate + NH4(+). It participates in amino-acid biosynthesis; L-histidine biosynthesis; L-histidine from 5-phospho-alpha-D-ribose 1-diphosphate: step 5/9. IGPS catalyzes the conversion of PRFAR and glutamine to IGP, AICAR and glutamate. The HisH subunit catalyzes the hydrolysis of glutamine to glutamate and ammonia as part of the synthesis of IGP and AICAR. The resulting ammonia molecule is channeled to the active site of HisF. In Geobacter metallireducens (strain ATCC 53774 / DSM 7210 / GS-15), this protein is Imidazole glycerol phosphate synthase subunit HisH.